A 412-amino-acid polypeptide reads, in one-letter code: MEKQKLSVKNSITDYIEWLAQYGASADGGVTRLLYTKEWMDAQLAVKTEMSSFGLETRFDDVGNVFGRLSGTQSPDEVIVTGSHIDTVINGGKYDGAYGVLAAMLALKQLKETYGAPKKTLEAVSLCEEEGSRFPMTYWGSGNMTGVFSEQDAKEPRDESGVSLQTAMHESGFGKGVFQSAYRTDISAFVELHIEQGKTLEMSGRDLGIVTSIAGQRRYLVTLEGECNHAGTTSMKWRKDPLAASSRIIHELLLRSDELPDELRLTCGKITAEPNVANVIPGRVQFSIDIRHQHQHVLEQFHQDMVALINGICLQKGIRAVIDEYMRIEPVPMDERLKAAAFETALENGFSCEEMVSGAGHDAQMIGRRYPACMLFVPSRGGVSHSPKEYTSARQLEIGVRALTDLLYKLAY.

Zn(2+) contacts are provided by histidine 84, aspartate 95, glutamate 130, and histidine 193. Residues arginine 218, asparagine 278, and arginine 291 each contribute to the allantoate site. Histidine 385 contributes to the Zn(2+) binding site.

It belongs to the peptidase M20 family. In terms of assembly, homodimer. The cofactor is Zn(2+).

It localises to the cytoplasm. It catalyses the reaction allantoate + H2O + 2 H(+) = (S)-2-ureidoglycine + NH4(+) + CO2. The protein operates within nitrogen metabolism; (S)-allantoin degradation. Its function is as follows. Involved in the anaerobic nitrogen utilization via the assimilation of allantoin. Catalyzes specifically the hydrolysis of allantoate to yield CO2, NH3 and S-ureidoglycine, which is unstable and readily undergoes a second deamination by S-ureidoglycine aminohydrolase AllE to yield S-ureidoglycolate and NH3. The sequence is that of Allantoate amidohydrolase from Bacillus subtilis (strain 168).